A 142-amino-acid chain; its full sequence is Peptide methionine sulfoxide reductase MsrB (142 aa).

Residues 3–126 (KEELKKKLSP…NSAALRFIPF (124 aa)) enclose the MsrB domain. Cys115 serves as the catalytic Nucleophile.

This sequence belongs to the MsrB Met sulfoxide reductase family.

It carries out the reaction L-methionyl-[protein] + [thioredoxin]-disulfide + H2O = L-methionyl-(R)-S-oxide-[protein] + [thioredoxin]-dithiol. This is Peptide methionine sulfoxide reductase MsrB from Lactococcus lactis subsp. cremoris (strain MG1363).